A 173-amino-acid chain; its full sequence is Small ribosomal subunit protein uS5 (173 aa).

In terms of domain architecture, S5 DRBM spans 18–81; the sequence is LREKMIAVNR…EQARRGMFKV (64 aa).

The protein belongs to the universal ribosomal protein uS5 family. In terms of assembly, part of the 30S ribosomal subunit. Contacts proteins S4 and S8.

Its function is as follows. With S4 and S12 plays an important role in translational accuracy. Located at the back of the 30S subunit body where it stabilizes the conformation of the head with respect to the body. In Bordetella petrii (strain ATCC BAA-461 / DSM 12804 / CCUG 43448), this protein is Small ribosomal subunit protein uS5.